A 196-amino-acid chain; its full sequence is Peptidyl-tRNA hydrolase (196 aa).

Position 17 (Tyr-17) interacts with tRNA. His-22 serves as the catalytic Proton acceptor. TRNA contacts are provided by Phe-68, Asn-70, and Asn-116.

Belongs to the PTH family. As to quaternary structure, monomer.

The protein resides in the cytoplasm. It carries out the reaction an N-acyl-L-alpha-aminoacyl-tRNA + H2O = an N-acyl-L-amino acid + a tRNA + H(+). Functionally, hydrolyzes ribosome-free peptidyl-tRNAs (with 1 or more amino acids incorporated), which drop off the ribosome during protein synthesis, or as a result of ribosome stalling. Catalyzes the release of premature peptidyl moieties from peptidyl-tRNA molecules trapped in stalled 50S ribosomal subunits, and thus maintains levels of free tRNAs and 50S ribosomes. The polypeptide is Peptidyl-tRNA hydrolase (Yersinia pseudotuberculosis serotype O:1b (strain IP 31758)).